A 514-amino-acid chain; its full sequence is 2,3-bisphosphoglycerate-independent phosphoglycerate mutase (514 aa).

Residues Asp14 and Ser64 each coordinate Mn(2+). Ser64 serves as the catalytic Phosphoserine intermediate. Substrate-binding positions include His125, 155–156 (RD), Arg187, Arg193, 263–266 (RADR), and Lys336. Asp403, His407, Asp444, His445, and His463 together coordinate Mn(2+).

The protein belongs to the BPG-independent phosphoglycerate mutase family. In terms of assembly, monomer. Requires Mn(2+) as cofactor.

The catalysed reaction is (2R)-2-phosphoglycerate = (2R)-3-phosphoglycerate. It functions in the pathway carbohydrate degradation; glycolysis; pyruvate from D-glyceraldehyde 3-phosphate: step 3/5. Functionally, catalyzes the interconversion of 2-phosphoglycerate and 3-phosphoglycerate. The chain is 2,3-bisphosphoglycerate-independent phosphoglycerate mutase from Enterobacter sp. (strain 638).